We begin with the raw amino-acid sequence, 1211 residues long: DNA-directed RNA polymerase subunit beta' (1211 aa).

Zn(2+) is bound by residues cysteine 60, cysteine 62, cysteine 75, and cysteine 78. 3 residues coordinate Mg(2+): aspartate 450, aspartate 452, and aspartate 454. Positions 819, 893, 900, and 903 each coordinate Zn(2+).

Belongs to the RNA polymerase beta' chain family. In terms of assembly, the RNAP catalytic core consists of 2 alpha, 1 beta, 1 beta' and 1 omega subunit. When a sigma factor is associated with the core the holoenzyme is formed, which can initiate transcription. Mg(2+) serves as cofactor. It depends on Zn(2+) as a cofactor.

The catalysed reaction is RNA(n) + a ribonucleoside 5'-triphosphate = RNA(n+1) + diphosphate. Functionally, DNA-dependent RNA polymerase catalyzes the transcription of DNA into RNA using the four ribonucleoside triphosphates as substrates. This Streptococcus equi subsp. zooepidemicus (strain H70) protein is DNA-directed RNA polymerase subunit beta'.